Reading from the N-terminus, the 323-residue chain is o-succinylbenzoate synthase (323 aa).

K134 functions as the Proton donor in the catalytic mechanism. 3 residues coordinate Mg(2+): D162, E191, and D214. K236 functions as the Proton acceptor in the catalytic mechanism.

This sequence belongs to the mandelate racemase/muconate lactonizing enzyme family. MenC type 1 subfamily. A divalent metal cation serves as cofactor.

It catalyses the reaction (1R,6R)-6-hydroxy-2-succinyl-cyclohexa-2,4-diene-1-carboxylate = 2-succinylbenzoate + H2O. Its pathway is quinol/quinone metabolism; 1,4-dihydroxy-2-naphthoate biosynthesis; 1,4-dihydroxy-2-naphthoate from chorismate: step 4/7. The protein operates within quinol/quinone metabolism; menaquinone biosynthesis. Its function is as follows. Converts 2-succinyl-6-hydroxy-2,4-cyclohexadiene-1-carboxylate (SHCHC) to 2-succinylbenzoate (OSB). In Yersinia pseudotuberculosis serotype IB (strain PB1/+), this protein is o-succinylbenzoate synthase.